Reading from the N-terminus, the 649-residue chain is Macrolide export ATP-binding/permease protein MacB 1 (649 aa).

The ABC transporter domain maps to 5–243 (LELEGIRRSY…AAAELMSLTP (239 aa)). 41 to 48 (GASGSGKS) is a binding site for ATP. Helical transmembrane passes span 274-294 (ALTM…LVVG), 420-440 (VVGQ…VVAE), 524-544 (LFLT…VMNI), 578-598 (VLVC…IGLI), and 608-628 (IAFP…IGVV).

The protein belongs to the ABC transporter superfamily. Macrolide exporter (TC 3.A.1.122) family. In terms of assembly, homodimer. Part of the tripartite efflux system MacAB-TolC, which is composed of an inner membrane transporter, MacB, a periplasmic membrane fusion protein, MacA, and an outer membrane component, TolC. The complex forms a large protein conduit and can translocate molecules across both the inner and outer membranes. Interacts with MacA.

The protein localises to the cell inner membrane. Functionally, part of the tripartite efflux system MacAB-TolC. MacB is a non-canonical ABC transporter that contains transmembrane domains (TMD), which form a pore in the inner membrane, and an ATP-binding domain (NBD), which is responsible for energy generation. Confers resistance against macrolides. This chain is Macrolide export ATP-binding/permease protein MacB 1, found in Yersinia pestis bv. Antiqua (strain Antiqua).